Consider the following 267-residue polypeptide: Tryptophan synthase alpha chain (267 aa).

Residues glutamate 47 and aspartate 58 each act as proton acceptor in the active site.

The protein belongs to the TrpA family. In terms of assembly, tetramer of two alpha and two beta chains.

It carries out the reaction (1S,2R)-1-C-(indol-3-yl)glycerol 3-phosphate + L-serine = D-glyceraldehyde 3-phosphate + L-tryptophan + H2O. It functions in the pathway amino-acid biosynthesis; L-tryptophan biosynthesis; L-tryptophan from chorismate: step 5/5. In terms of biological role, the alpha subunit is responsible for the aldol cleavage of indoleglycerol phosphate to indole and glyceraldehyde 3-phosphate. This Chlorobium limicola (strain DSM 245 / NBRC 103803 / 6330) protein is Tryptophan synthase alpha chain.